Here is a 598-residue protein sequence, read N- to C-terminus: MVEQASTPYLFADMLARVHAICAALAKSGGWPEGIDFSRVVVEPPRDPSHGDMATNAAMVLAKEAKAKPRDLAEQIAERLRADELVAKVDVAGPGFINLTLQPSVWSKALATILREGAAYGRVAPVPGAPKVNVEYVSANPTGPMHVGHCRGAVFGDALSSLLQFAGRDVTREYYINDAGAQVDVLARSAYLRYREALGEDIGAIPEGLYPGDYLKPVGQALKTEHGDKLKAMPDAQWLPIVRDKAIAMMMDEIKDDLAALNIRHDVFFSERSLITGGNNKVAETIDFLRERGDVYEGRLPPPKGAPVEDWEDREQLLFRATAFGDDVDRPLIKSDGSYTYFASDIANHRHKFERGFADLIDVFGADHGGYIKRMQAAVKAVTAAQATLDVKVVQLVKLLRNGEPVKMSKRSGDFVTLREVVDEVGRDAVRFMMLYRKNDAVLDFDLAKVIEQSKDNPVFYVQYGHARGHSIFRNARESLPELPEEEGARIAFLREAKLERLADSAEHDLLKRLALYPRTVESAAMAHEPHRIAFYLYELASEFHALWTRGRDLPYLRFIIDDDAELTKARLAMVQGVVSVLASGLAILGVNAPDAMR.

Residues 139–149 carry the 'HIGH' region motif; that stretch reads ANPTGPMHVGH.

Belongs to the class-I aminoacyl-tRNA synthetase family. Monomer.

Its subcellular location is the cytoplasm. It carries out the reaction tRNA(Arg) + L-arginine + ATP = L-arginyl-tRNA(Arg) + AMP + diphosphate. This is Arginine--tRNA ligase from Bradyrhizobium sp. (strain ORS 278).